Reading from the N-terminus, the 260-residue chain is Adenosylcobinamide-GDP ribazoletransferase (260 aa).

6 helical membrane passes run 7–27 (WYFLWGGDSVGAAILFYTRLP), 45–65 (LMGLLLSLILLALDRGLHWLG), 117–137 (AYGVMAIAVVLLLKTFALASF), 145–165 (WALIMALGWGRWGQLLAIALY), 187–207 (LLLGTMIIVFGGVGMGYALAI), and 210–230 (WLILGATGSSALIAWAVGRWF).

Belongs to the CobS family. Mg(2+) serves as cofactor.

It is found in the cell inner membrane. The catalysed reaction is alpha-ribazole + adenosylcob(III)inamide-GDP = adenosylcob(III)alamin + GMP + H(+). It catalyses the reaction alpha-ribazole 5'-phosphate + adenosylcob(III)inamide-GDP = adenosylcob(III)alamin 5'-phosphate + GMP + H(+). It functions in the pathway cofactor biosynthesis; adenosylcobalamin biosynthesis; adenosylcobalamin from cob(II)yrinate a,c-diamide: step 7/7. Its function is as follows. Joins adenosylcobinamide-GDP and alpha-ribazole to generate adenosylcobalamin (Ado-cobalamin). Also synthesizes adenosylcobalamin 5'-phosphate from adenosylcobinamide-GDP and alpha-ribazole 5'-phosphate. The sequence is that of Adenosylcobinamide-GDP ribazoletransferase from Synechocystis sp. (strain ATCC 27184 / PCC 6803 / Kazusa).